Consider the following 111-residue polypeptide: C-X-C motif chemokine 14 (111 aa).

The first 34 residues, 1 to 34 (MSLLPRRAPPVSMRLLAAALLLLLLALYTARVDG), serve as a signal peptide directing secretion. 2 disulfide bridges follow: Cys37–Cys63 and Cys39–Cys84. The D-box signature appears at 67 to 81 (MVIITTKSVSRYRGQ).

Belongs to the intercrine alpha (chemokine CxC) family. In terms of processing, ubiquitinated, followed by degradation by the proteasome. As to expression, expressed in heart, brain, placenta, lung, liver, skeletal muscle, kidney and pancreas. Highly expressed in normal tissue without inflammatory stimuli and infrequently expressed in cancer cell lines. Weakly expressed in monocyte-derived dendritic cells. Not detected in lung or unstimulated peripheral blood lymphocytes.

The protein localises to the secreted. Its function is as follows. Potent chemoattractant for neutrophils, and weaker for dendritic cells. Not chemotactic for T-cells, B-cells, monocytes, natural killer cells or granulocytes. Does not inhibit proliferation of myeloid progenitors in colony formation assays. This Homo sapiens (Human) protein is C-X-C motif chemokine 14 (CXCL14).